The primary structure comprises 146 residues: D-aminoacyl-tRNA deacylase (146 aa).

A Gly-cisPro motif, important for rejection of L-amino acids motif is present at residues 137-138 (GP).

Belongs to the DTD family. Homodimer.

It localises to the cytoplasm. The catalysed reaction is glycyl-tRNA(Ala) + H2O = tRNA(Ala) + glycine + H(+). The enzyme catalyses a D-aminoacyl-tRNA + H2O = a tRNA + a D-alpha-amino acid + H(+). Its function is as follows. An aminoacyl-tRNA editing enzyme that deacylates mischarged D-aminoacyl-tRNAs. Also deacylates mischarged glycyl-tRNA(Ala), protecting cells against glycine mischarging by AlaRS. Acts via tRNA-based rather than protein-based catalysis; rejects L-amino acids rather than detecting D-amino acids in the active site. By recycling D-aminoacyl-tRNA to D-amino acids and free tRNA molecules, this enzyme counteracts the toxicity associated with the formation of D-aminoacyl-tRNA entities in vivo and helps enforce protein L-homochirality. In Desulfatibacillum aliphaticivorans, this protein is D-aminoacyl-tRNA deacylase.